Here is a 376-residue protein sequence, read N- to C-terminus: ATP synthase gamma chain, chloroplastic (376 aa).

The N-terminal 52 residues, 1-52 (MSCSNVTMLVSSKPSLPDASNLSFRSAFNPFQLPSQNSSSSCTPSRPTSIQC), are a transit peptide targeting the chloroplast. The active site involves C133. The cysteines at positions 250 and 256 are disulfide-linked.

The protein belongs to the ATPase gamma chain family. As to quaternary structure, F-type ATPases have 2 components, CF(1) - the catalytic core - and CF(0) - the membrane proton channel. CF(1) has five subunits: alpha(3), beta(3), gamma(1), delta(1), epsilon(1). CF(0) has four main subunits: a, b, b' and c.

It is found in the plastid. The protein resides in the chloroplast thylakoid membrane. Its function is as follows. Produces ATP from ADP in the presence of a proton gradient across the membrane. The gamma chain is believed to be important in regulating ATPase activity and the flow of protons through the CF(0) complex. The polypeptide is ATP synthase gamma chain, chloroplastic (ATPC) (Pisum sativum (Garden pea)).